A 488-amino-acid polypeptide reads, in one-letter code: Protein nucleotidyltransferase YdiU (488 aa).

8 residues coordinate ATP: Gly91, Gly93, Arg94, Lys114, Asp126, Gly127, Arg177, and Arg184. Asp253 acts as the Proton acceptor in catalysis. 2 residues coordinate Mg(2+): Asn254 and Asp263. Residue Asp263 participates in ATP binding.

This sequence belongs to the SELO family. Requires Mg(2+) as cofactor. Mn(2+) is required as a cofactor.

It carries out the reaction L-seryl-[protein] + ATP = 3-O-(5'-adenylyl)-L-seryl-[protein] + diphosphate. It catalyses the reaction L-threonyl-[protein] + ATP = 3-O-(5'-adenylyl)-L-threonyl-[protein] + diphosphate. The enzyme catalyses L-tyrosyl-[protein] + ATP = O-(5'-adenylyl)-L-tyrosyl-[protein] + diphosphate. The catalysed reaction is L-histidyl-[protein] + UTP = N(tele)-(5'-uridylyl)-L-histidyl-[protein] + diphosphate. It carries out the reaction L-seryl-[protein] + UTP = O-(5'-uridylyl)-L-seryl-[protein] + diphosphate. It catalyses the reaction L-tyrosyl-[protein] + UTP = O-(5'-uridylyl)-L-tyrosyl-[protein] + diphosphate. Its function is as follows. Nucleotidyltransferase involved in the post-translational modification of proteins. It can catalyze the addition of adenosine monophosphate (AMP) or uridine monophosphate (UMP) to a protein, resulting in modifications known as AMPylation and UMPylation. This Bacillus thuringiensis subsp. konkukian (strain 97-27) protein is Protein nucleotidyltransferase YdiU.